Consider the following 359-residue polypeptide: MTKRILVLEDGTVFEGKAFGADIDVTGEIVFNTGMTGYQESITDQSYNGQILTFTYPLVGNYGINRDDYESIIPTCKGVVVFEEARRASNWRNQMTLDEFLKAKKIPGISGIDTRALTKIIRKHGTMRATLTHVGDSMDHVTDQLQATVLPTDNIKQVSTKTSYPAPGVGLSVVLVDFGLKHSILRELSKRNCNVTVVPYSTTAEEILHLNPDGVMLSNGPGNPEDVPQALDMIRGVQGKIPIFGICMGHQLFAMANGAKTYKMKFGHRGFNHAVREIATGRVDFTSQNHGYAVSREDLPEHLIITHEEINDKSVEGVRHRYQPAFSVQYHPDAAPGPHDASYLFDEFIEMMEVFKQSN.

The CPSase stretch occupies residues 1–169 (MTKRILVLED…TKTSYPAPGV (169 aa)). Positions 46, 220, and 222 each coordinate L-glutamine. The 187-residue stretch at 172-358 (SVVLVDFGLK…IEMMEVFKQS (187 aa)) folds into the Glutamine amidotransferase type-1 domain. Residue Cys-247 is the Nucleophile of the active site. L-glutamine contacts are provided by Met-248, Gln-251, Asn-289, Gly-291, and Tyr-292. Active-site residues include His-331 and Asp-333.

Belongs to the CarA family. As to quaternary structure, composed of two chains; the small (or glutamine) chain promotes the hydrolysis of glutamine to ammonia, which is used by the large (or ammonia) chain to synthesize carbamoyl phosphate. Tetramer of heterodimers (alpha,beta)4.

The enzyme catalyses hydrogencarbonate + L-glutamine + 2 ATP + H2O = carbamoyl phosphate + L-glutamate + 2 ADP + phosphate + 2 H(+). It carries out the reaction L-glutamine + H2O = L-glutamate + NH4(+). The protein operates within amino-acid biosynthesis; L-arginine biosynthesis; carbamoyl phosphate from bicarbonate: step 1/1. It functions in the pathway pyrimidine metabolism; UMP biosynthesis via de novo pathway; (S)-dihydroorotate from bicarbonate: step 1/3. Its function is as follows. Small subunit of the glutamine-dependent carbamoyl phosphate synthetase (CPSase). CPSase catalyzes the formation of carbamoyl phosphate from the ammonia moiety of glutamine, carbonate, and phosphate donated by ATP, constituting the first step of 2 biosynthetic pathways, one leading to arginine and/or urea and the other to pyrimidine nucleotides. The small subunit (glutamine amidotransferase) binds and cleaves glutamine to supply the large subunit with the substrate ammonia. In Streptococcus pneumoniae (strain ATCC BAA-255 / R6), this protein is Carbamoyl phosphate synthase small chain.